A 78-amino-acid chain; its full sequence is Antitoxin VapB2 (78 aa).

One can recognise a SpoVT-AbrB domain in the interval alanine 4 to asparagine 44.

Belongs to the VapB family. As to quaternary structure, forms complexes with VapC2; probably VapC2(4):VapB2(2) in the absence of DNA, and VapC2(4):VapB2(4) in the presence of DNA. Crystallizes as heterodimers with stoichiometry VapC2(4):VapB2(4) in the presence of its probable promoter DNA. The heterodimers are in contact via alternative VapC-VapC and VapB-VapB interactions. This subunit contacts DNA.

In terms of biological role, antitoxin component of a type II toxin-antitoxin (TA) system. Upon expression in E.coli or S.cerevisiae neutralizes the effect of cognate toxin VapC2, partially inhibits the RNase activity of VapC2. This Rickettsia felis (strain ATCC VR-1525 / URRWXCal2) (Rickettsia azadi) protein is Antitoxin VapB2 (vapB2).